Reading from the N-terminus, the 214-residue chain is Small ribosomal subunit protein uS3c (214 aa).

A KH type-2 domain is found at 39–111 (IRTYLNKLAK…QLTINIIEVE (73 aa)).

The protein belongs to the universal ribosomal protein uS3 family. Part of the 30S ribosomal subunit.

It is found in the plastid. The protein resides in the chloroplast. This is Small ribosomal subunit protein uS3c (rps3) from Trieres chinensis (Marine centric diatom).